The primary structure comprises 370 residues: Ubiquitin carboxyl-terminal hydrolase 12-B (370 aa).

Positions 39–369 (FGLVNFGNTC…SGYILFYQSR (331 aa)) constitute a USP domain. The active-site Nucleophile is cysteine 48. Positions 145-168 (KQEKQNGRIPNGNIDNENNNNTPD) are disordered. The span at 155–165 (NGNIDNENNNN) shows a compositional bias: low complexity. Positions 186, 189, 233, and 236 each coordinate Zn(2+). The active-site Proton acceptor is the histidine 317.

The protein belongs to the peptidase C19 family. USP12/USP46 subfamily. Interacts with WDR48.

The enzyme catalyses Thiol-dependent hydrolysis of ester, thioester, amide, peptide and isopeptide bonds formed by the C-terminal Gly of ubiquitin (a 76-residue protein attached to proteins as an intracellular targeting signal).. Deubiquitinating enzyme. Has almost no deubiquitinating activity by itself and requires the interaction with wdr48 to have a high activity. The protein is Ubiquitin carboxyl-terminal hydrolase 12-B (usp12-b) of Xenopus laevis (African clawed frog).